The sequence spans 584 residues: Aspartate--tRNA(Asp/Asn) ligase (584 aa).

L-aspartate is bound at residue E173. Residues 197 to 200 (QLFK) form an aspartate region. R219 contributes to the L-aspartate binding site. ATP contacts are provided by residues 219–221 (RDE) and Q228. H447 is a binding site for L-aspartate. An ATP-binding site is contributed by E477. R484 provides a ligand contact to L-aspartate. An ATP-binding site is contributed by 529 to 532 (GFDR).

This sequence belongs to the class-II aminoacyl-tRNA synthetase family. Type 1 subfamily. As to quaternary structure, homodimer.

It is found in the cytoplasm. It catalyses the reaction tRNA(Asx) + L-aspartate + ATP = L-aspartyl-tRNA(Asx) + AMP + diphosphate. In terms of biological role, aspartyl-tRNA synthetase with relaxed tRNA specificity since it is able to aspartylate not only its cognate tRNA(Asp) but also tRNA(Asn). Reaction proceeds in two steps: L-aspartate is first activated by ATP to form Asp-AMP and then transferred to the acceptor end of tRNA(Asp/Asn). The protein is Aspartate--tRNA(Asp/Asn) ligase of Campylobacter hominis (strain ATCC BAA-381 / DSM 21671 / CCUG 45161 / LMG 19568 / NCTC 13146 / CH001A).